A 72-amino-acid chain; its full sequence is Protein kish-A (72 aa).

The N-terminal stretch at 1-26 (MSAIFNFQSLLIVILLLICTCAYLRS) is a signal peptide. Residues 27-53 (LVPNLLDKNKTGVLGIFWKCARIGERK) lie on the Extracellular side of the membrane. N-linked (GlcNAc...) asparagine glycosylation occurs at asparagine 35. Residues 54–71 (SPYVAVCCVVMAFSILFM) form a helical membrane-spanning segment. Position 72 (glutamine 72) is a topological domain, cytoplasmic.

It belongs to the KISH family.

It localises to the golgi apparatus membrane. Functionally, involved in the early part of the secretory pathway. The sequence is that of Protein kish-A (tmem167a) from Xenopus laevis (African clawed frog).